A 102-amino-acid chain; its full sequence is Small ribosomal subunit protein uS10 (102 aa).

It belongs to the universal ribosomal protein uS10 family. In terms of assembly, part of the 30S ribosomal subunit.

In terms of biological role, involved in the binding of tRNA to the ribosomes. The protein is Small ribosomal subunit protein uS10 of Frankia alni (strain DSM 45986 / CECT 9034 / ACN14a).